A 515-amino-acid polypeptide reads, in one-letter code: N-acetylglucosamine-1-phosphodiester alpha-N-acetylglucosaminidase (515 aa).

The signal sequence occupies residues 1 to 25 (MATSTGRWLLLRLALFGFLWEASGG). Residues 26–49 (LDSGASRDDDLLLPYPRARARLPR) constitute a propeptide, removed in mature form. At 50–448 (DCTRVRAGNR…AGELSFFTRT (399 aa)) the chain is on the lumenal side. Intrachain disulfides connect Cys-115–Cys-148, Cys-132–Cys-323, Cys-307–Cys-314, Cys-362–Cys-373, and Cys-380–Cys-389. N-linked (GlcNAc...) asparagine glycans are attached at residues Asn-208, Asn-214, and Asn-296. One can recognise an EGF-like domain in the interval 358–390 (DELDCGPSNCSQHGLCTETGCRCDAGWTGSNCS). 3 N-linked (GlcNAc...) asparagine glycosylation sites follow: Asn-366, Asn-388, and Asn-420. Residues 449–469 (AWLALTLALAFLLLISTAANL) form a helical membrane-spanning segment. The Cytoplasmic portion of the chain corresponds to 470–515 (SLLLSRAERNRRLHGDYAYHPLQEMNGEPLAAEKEQPGGAHNPFKD). The tract at residues 486-493 (YAYHPLQE) is mediates the interaction with AP4M1. The Tyrosine-based internalization motif signature appears at 488 to 491 (YHPL). The NPF internalization motif signature appears at 511–515 (NPFKD).

As to quaternary structure, homotetramer arranged as two disulfide-linked homodimers. Interacts with AP4M1. In terms of processing, the precursor is cleaved and activated in the trans-Golgi network by a furin endopeptidase. Isoform 2 may be brain-specific.

Its subcellular location is the golgi apparatus. It is found in the golgi stack membrane. It localises to the trans-Golgi network. It carries out the reaction N(4)-[6-(N-acetyl-alpha-D-glucosaminyl-1-phospho)-alpha-D-mannosyl-(1-&gt;2)-alpha-D-mannosyl-(glycan)]-L-asparaginyl-[protein] + H2O = N(4)-[6-phospho-alpha-D-mannosyl-(1-&gt;2)-alpha-D-mannosyl-(glycan)]-L-asparaginyl-[protein] + N-acetyl-D-glucosamine + H(+). It functions in the pathway protein modification; protein glycosylation. Functionally, catalyzes the second step in the formation of the mannose 6-phosphate targeting signal on lysosomal enzyme oligosaccharides by removing GlcNAc residues from GlcNAc-alpha-P-mannose moieties, which are formed in the first step. Also hydrolyzes UDP-GlcNAc, a sugar donor for Golgi N-acetylglucosaminyltransferases. The chain is N-acetylglucosamine-1-phosphodiester alpha-N-acetylglucosaminidase (NAGPA) from Homo sapiens (Human).